Reading from the N-terminus, the 486-residue chain is tRNA-2-methylthio-N(6)-dimethylallyladenosine synthase (486 aa).

Residues 35 to 151 form the MTTase N-terminal domain; that stretch reads RNLYVESYGC…LPRLLATVDS (117 aa). [4Fe-4S] cluster contacts are provided by Cys44, Cys80, Cys114, Cys189, Cys193, and Cys196. The region spanning 175 to 419 is the Radical SAM core domain; the sequence is NSNGVSAFIS…IDKQRQHSFE (245 aa). Residues 422 to 485 form the TRAM domain; sequence LKDIGKVYQV…TGTLLGEICT (64 aa).

The protein belongs to the methylthiotransferase family. MiaB subfamily. In terms of assembly, monomer. Requires [4Fe-4S] cluster as cofactor.

It localises to the cytoplasm. It catalyses the reaction N(6)-dimethylallyladenosine(37) in tRNA + (sulfur carrier)-SH + AH2 + 2 S-adenosyl-L-methionine = 2-methylsulfanyl-N(6)-dimethylallyladenosine(37) in tRNA + (sulfur carrier)-H + 5'-deoxyadenosine + L-methionine + A + S-adenosyl-L-homocysteine + 2 H(+). In terms of biological role, catalyzes the methylthiolation of N6-(dimethylallyl)adenosine (i(6)A), leading to the formation of 2-methylthio-N6-(dimethylallyl)adenosine (ms(2)i(6)A) at position 37 in tRNAs that read codons beginning with uridine. The chain is tRNA-2-methylthio-N(6)-dimethylallyladenosine synthase from Amoebophilus asiaticus (strain 5a2).